The sequence spans 181 residues: Large ribosomal subunit protein uL6 (181 aa).

This sequence belongs to the universal ribosomal protein uL6 family. As to quaternary structure, part of the 50S ribosomal subunit.

Its function is as follows. This protein binds to the 23S rRNA, and is important in its secondary structure. It is located near the subunit interface in the base of the L7/L12 stalk, and near the tRNA binding site of the peptidyltransferase center. This chain is Large ribosomal subunit protein uL6, found in Rhodopirellula baltica (strain DSM 10527 / NCIMB 13988 / SH1).